The chain runs to 612 residues: Dihydroxy-acid dehydratase (612 aa).

Asp81 lines the Mg(2+) pocket. Residue Cys122 coordinates [2Fe-2S] cluster. Residues Asp123 and Lys124 each contribute to the Mg(2+) site. Lys124 is subject to N6-carboxylysine. Cys193 lines the [2Fe-2S] cluster pocket. Residue Glu489 coordinates Mg(2+). Catalysis depends on Ser515, which acts as the Proton acceptor.

The protein belongs to the IlvD/Edd family. As to quaternary structure, homodimer. It depends on [2Fe-2S] cluster as a cofactor. Mg(2+) is required as a cofactor.

The catalysed reaction is (2R)-2,3-dihydroxy-3-methylbutanoate = 3-methyl-2-oxobutanoate + H2O. It catalyses the reaction (2R,3R)-2,3-dihydroxy-3-methylpentanoate = (S)-3-methyl-2-oxopentanoate + H2O. It functions in the pathway amino-acid biosynthesis; L-isoleucine biosynthesis; L-isoleucine from 2-oxobutanoate: step 3/4. Its pathway is amino-acid biosynthesis; L-valine biosynthesis; L-valine from pyruvate: step 3/4. Functionally, functions in the biosynthesis of branched-chain amino acids. Catalyzes the dehydration of (2R,3R)-2,3-dihydroxy-3-methylpentanoate (2,3-dihydroxy-3-methylvalerate) into 2-oxo-3-methylpentanoate (2-oxo-3-methylvalerate) and of (2R)-2,3-dihydroxy-3-methylbutanoate (2,3-dihydroxyisovalerate) into 2-oxo-3-methylbutanoate (2-oxoisovalerate), the penultimate precursor to L-isoleucine and L-valine, respectively. The sequence is that of Dihydroxy-acid dehydratase from Xanthomonas campestris pv. campestris (strain B100).